The following is a 320-amino-acid chain: Cytochrome f (320 aa).

The signal sequence occupies residues 1-35 (MHTKNLFYSRTQQITQYLSALLMMVILTRTSISSA). Residues Tyr36, Cys56, Cys59, and His60 each coordinate heme. Residues 286-306 (VQVLLFFFASIILAQIFLVLK) traverse the membrane as a helical segment.

This sequence belongs to the cytochrome f family. In terms of assembly, the 4 large subunits of the cytochrome b6-f complex are cytochrome b6, subunit IV (17 kDa polypeptide, petD), cytochrome f and the Rieske protein, while the 4 small subunits are PetG, PetL, PetM and PetN. The complex functions as a dimer. Heme is required as a cofactor.

The protein localises to the plastid thylakoid membrane. Its function is as follows. Component of the cytochrome b6-f complex, which mediates electron transfer between photosystem II (PSII) and photosystem I (PSI), cyclic electron flow around PSI, and state transitions. The polypeptide is Cytochrome f (Cuscuta gronovii (Common dodder)).